A 406-amino-acid chain; its full sequence is MSPSDVPINWKRNLTVAWLGCFLTGAAFSLVMPFLPLYVEQLGVTGHSALNMWSGLVFSITFLFSAIASPFWGGLADRKGRKIMLLRSALGMAIVMLLMGLAQNIWQFLLLRALLGLLGGFVPNANALIATQVPRNKSGWALGTLSTGGVSGALLGPLAGGLLADQYGLRPVFFITASVLLVCFLLTLFFTRERFQPVSKKEMLHVREVVGSLKNPKLVLSLFVTTLIIQVATGSIAPILTLYVRELAGNVSNIAFISGMIASVPGVAALLSAPRLGKLGDRIGPEKILITALIISVLLLIPMSFVQTPWQLGVLRFLLGAADGALLPAVQTLLVYNASNQIAGRIFSYNQSFRDIGNVTGPLMGAAISASYGFRAVFCVTAGVVLFNAIYSWNSLRRRRETLAAK.

A run of 11 helical transmembrane segments spans residues 16–36 (VAWL…PFLP), 56–76 (LVFS…GGLA), 90–110 (LGMA…QFLL), 113–133 (ALLG…ATQV), 144–164 (TLST…GLLA), 171–191 (PVFF…LFFT), 222–242 (LFVT…ILTL), 254–274 (IAFI…LSAP), 288–308 (ILIT…FVQT), 317–337 (FLLG…LVYN), and 376–396 (AVFC…WNSL).

Belongs to the major facilitator superfamily. DHA1 family. MdtG (TC 2.A.1.2.20) subfamily.

Its subcellular location is the cell inner membrane. This chain is Multidrug resistance protein MdtG, found in Citrobacter koseri (strain ATCC BAA-895 / CDC 4225-83 / SGSC4696).